The sequence spans 61 residues: Small ribosomal subunit protein uS14B (61 aa).

Positions 24, 27, 40, and 43 each coordinate Zn(2+).

It belongs to the universal ribosomal protein uS14 family. Zinc-binding uS14 subfamily. In terms of assembly, part of the 30S ribosomal subunit. Contacts proteins S3 and S10. Zn(2+) is required as a cofactor.

Binds 16S rRNA, required for the assembly of 30S particles and may also be responsible for determining the conformation of the 16S rRNA at the A site. The protein is Small ribosomal subunit protein uS14B of Staphylococcus epidermidis (strain ATCC 35984 / DSM 28319 / BCRC 17069 / CCUG 31568 / BM 3577 / RP62A).